Consider the following 135-residue polypeptide: UPF0216 protein MTH_949 (135 aa).

The protein belongs to the UPF0216 family.

The protein is UPF0216 protein MTH_949 of Methanothermobacter thermautotrophicus (strain ATCC 29096 / DSM 1053 / JCM 10044 / NBRC 100330 / Delta H) (Methanobacterium thermoautotrophicum).